The sequence spans 717 residues: Probable E3 ubiquitin-protein ligase WAVH2 (717 aa).

Composition is skewed to polar residues over residues 13 to 28 and 85 to 94; these read VSSN…SLHT and RTTSNATPRT. A disordered region spans residues 13-120; it reads VSSNQDKPQQ…SSSSSSSQGG (108 aa). A compositionally biased stretch (low complexity) spans 95-117; that stretch reads SNSSSPKFFSNPSSPKSSSSSSS. An RING-type; atypical zinc finger spans residues 140-184; that stretch reads CAICLQRVNSNQSNSTAAIFTAECSHSFHLSCVNGLEDKRCPFCS. The VWFA domain maps to 326 to 456; sequence DLVTVLDLSN…LNATRIPFVV (131 aa).

In terms of tissue distribution, expressed in root tips, cotyledons, leaf primordia and hypocotyls.

The catalysed reaction is S-ubiquitinyl-[E2 ubiquitin-conjugating enzyme]-L-cysteine + [acceptor protein]-L-lysine = [E2 ubiquitin-conjugating enzyme]-L-cysteine + N(6)-ubiquitinyl-[acceptor protein]-L-lysine.. Its function is as follows. Probable E3 ubiquitin-protein ligase involved in the regulation of root growth. Acts as a positive regulator of root gravitropism. The sequence is that of Probable E3 ubiquitin-protein ligase WAVH2 from Arabidopsis thaliana (Mouse-ear cress).